We begin with the raw amino-acid sequence, 261 residues long: Phosphatidylglycerol--prolipoprotein diacylglyceryl transferase (261 aa).

The next 4 helical transmembrane spans lie at 17 to 37 (FAIH…LLLG), 59 to 79 (LLFA…TLFY), 94 to 114 (IWEG…ALLW), and 121 to 141 (TSFF…LAFG). Arg142 contributes to the a 1,2-diacyl-sn-glycero-3-phospho-(1'-sn-glycerol) binding site. 2 helical membrane passes run 174 to 194 (PSQI…LWIY) and 228 to 248 (FLGL…PMII).

The protein belongs to the Lgt family.

The protein resides in the cell inner membrane. The enzyme catalyses L-cysteinyl-[prolipoprotein] + a 1,2-diacyl-sn-glycero-3-phospho-(1'-sn-glycerol) = an S-1,2-diacyl-sn-glyceryl-L-cysteinyl-[prolipoprotein] + sn-glycerol 1-phosphate + H(+). It functions in the pathway protein modification; lipoprotein biosynthesis (diacylglyceryl transfer). Catalyzes the transfer of the diacylglyceryl group from phosphatidylglycerol to the sulfhydryl group of the N-terminal cysteine of a prolipoprotein, the first step in the formation of mature lipoproteins. The polypeptide is Phosphatidylglycerol--prolipoprotein diacylglyceryl transferase (Polynucleobacter asymbioticus (strain DSM 18221 / CIP 109841 / QLW-P1DMWA-1) (Polynucleobacter necessarius subsp. asymbioticus)).